A 320-amino-acid polypeptide reads, in one-letter code: L-lactate dehydrogenase A (320 aa).

Residues Arg88, Asn120, and Arg151 each coordinate substrate. An NAD(+)-binding site is contributed by Asn120. Catalysis depends on His175, which acts as the Proton acceptor.

The protein belongs to the LDH/MDH superfamily. LDH family. Homotetramer.

The protein resides in the cytoplasm. The enzyme catalyses (S)-lactate + NAD(+) = pyruvate + NADH + H(+). Its pathway is fermentation; pyruvate fermentation to lactate; (S)-lactate from pyruvate: step 1/1. Converts pyruvate to lactate. This Rhizopus oryzae (Mucormycosis agent) protein is L-lactate dehydrogenase A (LDHA).